Consider the following 388-residue polypeptide: Succinate--CoA ligase [ADP-forming] subunit beta (388 aa).

The 236-residue stretch at 9–244 (KQLFADYGLP…PSQEDPREAH (236 aa)) folds into the ATP-grasp domain. ATP is bound by residues lysine 46, 53 to 55 (GRG), glutamate 99, threonine 102, and glutamate 107. Residues asparagine 199 and aspartate 213 each coordinate Mg(2+). Residues asparagine 264 and 321 to 323 (GIV) contribute to the substrate site.

The protein belongs to the succinate/malate CoA ligase beta subunit family. As to quaternary structure, heterotetramer of two alpha and two beta subunits. It depends on Mg(2+) as a cofactor.

It catalyses the reaction succinate + ATP + CoA = succinyl-CoA + ADP + phosphate. The catalysed reaction is GTP + succinate + CoA = succinyl-CoA + GDP + phosphate. The protein operates within carbohydrate metabolism; tricarboxylic acid cycle; succinate from succinyl-CoA (ligase route): step 1/1. Succinyl-CoA synthetase functions in the citric acid cycle (TCA), coupling the hydrolysis of succinyl-CoA to the synthesis of either ATP or GTP and thus represents the only step of substrate-level phosphorylation in the TCA. The beta subunit provides nucleotide specificity of the enzyme and binds the substrate succinate, while the binding sites for coenzyme A and phosphate are found in the alpha subunit. The polypeptide is Succinate--CoA ligase [ADP-forming] subunit beta (Hahella chejuensis (strain KCTC 2396)).